The primary structure comprises 124 residues: Small ribosomal subunit protein bS6 (124 aa).

The segment at 96–124 is disordered; that stretch reads ETAPSPMMKEVQREEARKAAQTTTEGQPA. A compositionally biased stretch (polar residues) spans 115 to 124; that stretch reads AQTTTEGQPA.

Belongs to the bacterial ribosomal protein bS6 family.

Binds together with bS18 to 16S ribosomal RNA. This chain is Small ribosomal subunit protein bS6, found in Cupriavidus metallidurans (strain ATCC 43123 / DSM 2839 / NBRC 102507 / CH34) (Ralstonia metallidurans).